The primary structure comprises 169 residues: Protein-export protein SecB (169 aa).

It belongs to the SecB family. Homotetramer, a dimer of dimers. One homotetramer interacts with 1 SecA dimer.

The protein localises to the cytoplasm. One of the proteins required for the normal export of preproteins out of the cell cytoplasm. It is a molecular chaperone that binds to a subset of precursor proteins, maintaining them in a translocation-competent state. It also specifically binds to its receptor SecA. The protein is Protein-export protein SecB of Haemophilus influenzae (strain PittEE).